The primary structure comprises 254 residues: Receptor expression-enhancing protein 2 (254 aa).

The next 2 helical transmembrane spans lie at 1-21 and 35-55; these read MVSW…YPAY and YVKW…ETLT. At serine 152 the chain carries Phosphoserine. The segment at 164–254 is disordered; that stretch reads ALPLQGPDGR…KKTSAGGDSA (91 aa). Positions 195 to 204 are enriched in polar residues; sequence SVRSGTNQAD. A compositionally biased stretch (basic and acidic residues) spans 205–219; sequence PRTEISEDDTGDKAP.

This sequence belongs to the DP1 family. As to quaternary structure, interacts with odorant receptor proteins.

The protein localises to the membrane. In terms of biological role, required for endoplasmic reticulum (ER) network formation, shaping and remodeling. May enhance the cell surface expression of odorant receptors. The chain is Receptor expression-enhancing protein 2 (REEP2) from Bos taurus (Bovine).